The sequence spans 420 residues: UDP-N-acetylglucosamine 1-carboxyvinyltransferase (420 aa).

Residue 22–23 (KN) coordinates phosphoenolpyruvate. Position 93 (Arg93) interacts with UDP-N-acetyl-alpha-D-glucosamine. The active-site Proton donor is the Cys117. The residue at position 117 (Cys117) is a 2-(S-cysteinyl)pyruvic acid O-phosphothioketal. UDP-N-acetyl-alpha-D-glucosamine is bound by residues 162-165 (KVSV), Asp307, and Ile329.

It belongs to the EPSP synthase family. MurA subfamily.

The protein resides in the cytoplasm. It carries out the reaction phosphoenolpyruvate + UDP-N-acetyl-alpha-D-glucosamine = UDP-N-acetyl-3-O-(1-carboxyvinyl)-alpha-D-glucosamine + phosphate. Its pathway is cell wall biogenesis; peptidoglycan biosynthesis. Its function is as follows. Cell wall formation. Adds enolpyruvyl to UDP-N-acetylglucosamine. This Actinobacillus succinogenes (strain ATCC 55618 / DSM 22257 / CCUG 43843 / 130Z) protein is UDP-N-acetylglucosamine 1-carboxyvinyltransferase.